A 171-amino-acid polypeptide reads, in one-letter code: Ribulose bisphosphate carboxylase small subunit, chloroplastic (171 aa).

A chloroplast-targeting transit peptide spans 1 to 50; sequence MATGAGAGAATVVSAFTGLKSTAQFPSSFKMSNAAAEWEQKTTSNGGRVR.

Belongs to the RuBisCO small chain family. Heterohexadecamer of 8 large and 8 small subunits.

The protein localises to the plastid. Its subcellular location is the chloroplast. Functionally, ruBisCO catalyzes two reactions: the carboxylation of D-ribulose 1,5-bisphosphate, the primary event in carbon dioxide fixation, as well as the oxidative fragmentation of the pentose substrate. Both reactions occur simultaneously and in competition at the same active site. Although the small subunit is not catalytic it is essential for maximal activity. The polypeptide is Ribulose bisphosphate carboxylase small subunit, chloroplastic (Pinus thunbergii (Japanese black pine)).